A 233-amino-acid chain; its full sequence is Coproporphyrinogen-III oxidase 2, chloroplastic (233 aa).

The transit peptide at 1–48 directs the protein to the chloroplast; it reads MASHSSTLFTSPSSFILFSSHRLKSSPNYFTYHFPRSVKRPHFDLRCS. S174 lines the substrate pocket. The active-site Proton donor is H188.

Belongs to the aerobic coproporphyrinogen-III oxidase family. In terms of assembly, homodimer.

It localises to the plastid. The protein localises to the chloroplast. The catalysed reaction is coproporphyrinogen III + O2 + 2 H(+) = protoporphyrinogen IX + 2 CO2 + 2 H2O. Its pathway is porphyrin-containing compound metabolism; protoporphyrin-IX biosynthesis; protoporphyrinogen-IX from coproporphyrinogen-III (O2 route): step 1/1. It participates in porphyrin-containing compound metabolism; chlorophyll biosynthesis. In terms of biological role, key enzyme in heme biosynthesis. Catalyzes the oxidative decarboxylation of propionic acid side chains of rings A and B of coproporphyrinogen III. This Arabidopsis thaliana (Mouse-ear cress) protein is Coproporphyrinogen-III oxidase 2, chloroplastic (CPX2).